The sequence spans 653 residues: Chromosomal replication initiator protein DnaA (653 aa).

Residues 1-100 (MADVPADLAA…SAGEPPASAS (100 aa)) are domain I, interacts with DnaA modulators. The tract at residues 86 to 310 (ITVDDSAGEP…PAPATGPGEP (225 aa)) is disordered. Positions 101-312 (PAPPRYEEPE…PATGPGEPTA (212 aa)) are domain II. 2 stretches are compositionally biased toward basic and acidic residues: residues 120–150 (DPYESRGREGYEGYGRHRADDHRQGHNDRHQ) and 221–267 (PSYD…RRNI). The span at 284-310 (GSALPASSGAPGPLAAQPAPATGPGEP) shows a compositional bias: low complexity. Residues 313–529 (RLNPKYLFDT…GALIRVTAFA (217 aa)) are domain III, AAA+ region. ATP-binding residues include Gly357, Gly359, Lys360, and Thr361. The segment at 530–653 (SLNRQPVDLG…TELTNRIKNG (124 aa)) is domain IV, binds dsDNA.

Belongs to the DnaA family. Oligomerizes as a right-handed, spiral filament on DNA at oriC.

It localises to the cytoplasm. Its function is as follows. Plays an essential role in the initiation and regulation of chromosomal replication. ATP-DnaA binds to the origin of replication (oriC) to initiate formation of the DNA replication initiation complex once per cell cycle. Binds the DnaA box (a 9 base pair repeat at the origin) and separates the double-stranded (ds)DNA. Forms a right-handed helical filament on oriC DNA; dsDNA binds to the exterior of the filament while single-stranded (ss)DNA is stabiized in the filament's interior. The ATP-DnaA-oriC complex binds and stabilizes one strand of the AT-rich DNA unwinding element (DUE), permitting loading of DNA polymerase. After initiation quickly degrades to an ADP-DnaA complex that is not apt for DNA replication. Binds acidic phospholipids. This is Chromosomal replication initiator protein DnaA from Streptomyces avermitilis (strain ATCC 31267 / DSM 46492 / JCM 5070 / NBRC 14893 / NCIMB 12804 / NRRL 8165 / MA-4680).